A 38-amino-acid polypeptide reads, in one-letter code: SNGRNAAAGDKPSYWITLAITDCCANPVCNGKHCQGRR.

Residues Ser-1 to Thr-21 constitute a propeptide that is removed on maturation. Disulfide bonds link Cys-23-Cys-29 and Cys-24-Cys-34. Gln-35 is subject to Glutamine amide.

It belongs to the conotoxin A superfamily. The two analogs ([DelQ14]LvIC and [D1G,DelQ14]LvIC) are amidated at their N-terminal Cys. In terms of tissue distribution, expressed by the venom gland.

The protein localises to the secreted. Its function is as follows. Alpha-conotoxins bind to the nicotinic acetylcholine receptors (nAChR) and inhibit them. This synthetic peptide inhibits rat alpha-6/alpha-3-beta-4 nAChR (IC(50)=3.3 uM). The polypeptide is Alpha-conotoxin LvIC (Conus lividus (Livid cone)).